The following is a 299-amino-acid chain: Lipoyl synthase 2 (299 aa).

Positions 45, 50, 56, 71, 75, 78, and 295 each coordinate [4Fe-4S] cluster. Residues 57 to 284 enclose the Radical SAM core domain; that stretch reads YASGTATFLL…KSFCSKLGFK (228 aa).

It belongs to the radical SAM superfamily. Lipoyl synthase family. The cofactor is [4Fe-4S] cluster.

The protein localises to the cytoplasm. The catalysed reaction is [[Fe-S] cluster scaffold protein carrying a second [4Fe-4S](2+) cluster] + N(6)-octanoyl-L-lysyl-[protein] + 2 oxidized [2Fe-2S]-[ferredoxin] + 2 S-adenosyl-L-methionine + 4 H(+) = [[Fe-S] cluster scaffold protein] + N(6)-[(R)-dihydrolipoyl]-L-lysyl-[protein] + 4 Fe(3+) + 2 hydrogen sulfide + 2 5'-deoxyadenosine + 2 L-methionine + 2 reduced [2Fe-2S]-[ferredoxin]. It participates in protein modification; protein lipoylation via endogenous pathway; protein N(6)-(lipoyl)lysine from octanoyl-[acyl-carrier-protein]: step 2/2. Its function is as follows. Catalyzes the radical-mediated insertion of two sulfur atoms into the C-6 and C-8 positions of the octanoyl moiety bound to the lipoyl domains of lipoate-dependent enzymes, thereby converting the octanoylated domains into lipoylated derivatives. This is Lipoyl synthase 2 from Prochlorococcus marinus subsp. pastoris (strain CCMP1986 / NIES-2087 / MED4).